A 438-amino-acid chain; its full sequence is Aspartate--tRNA(Asp) ligase (438 aa).

An L-aspartate-binding site is contributed by glutamate 170. An aspartate region spans residues 192 to 195 (QLYK). Residue arginine 214 participates in L-aspartate binding. ATP-binding positions include 214 to 216 (RAE), 222 to 224 (RHL), and glutamate 361. Residues glutamate 361 and serine 364 each coordinate Mg(2+). Residues serine 364 and arginine 368 each contribute to the L-aspartate site. 409–412 (GAER) contributes to the ATP binding site.

Belongs to the class-II aminoacyl-tRNA synthetase family. Type 2 subfamily. Homodimer. Requires Mg(2+) as cofactor.

It is found in the cytoplasm. It carries out the reaction tRNA(Asp) + L-aspartate + ATP = L-aspartyl-tRNA(Asp) + AMP + diphosphate. In terms of biological role, catalyzes the attachment of L-aspartate to tRNA(Asp) in a two-step reaction: L-aspartate is first activated by ATP to form Asp-AMP and then transferred to the acceptor end of tRNA(Asp). This chain is Aspartate--tRNA(Asp) ligase, found in Pyrococcus furiosus (strain ATCC 43587 / DSM 3638 / JCM 8422 / Vc1).